The chain runs to 248 residues: Ubiquinone biosynthesis O-methyltransferase (248 aa).

S-adenosyl-L-methionine-binding residues include Arg-40, Gly-71, Asp-92, and Met-135.

It belongs to the methyltransferase superfamily. UbiG/COQ3 family.

The enzyme catalyses a 3-demethylubiquinol + S-adenosyl-L-methionine = a ubiquinol + S-adenosyl-L-homocysteine + H(+). It catalyses the reaction a 3-(all-trans-polyprenyl)benzene-1,2-diol + S-adenosyl-L-methionine = a 2-methoxy-6-(all-trans-polyprenyl)phenol + S-adenosyl-L-homocysteine + H(+). Its pathway is cofactor biosynthesis; ubiquinone biosynthesis. O-methyltransferase that catalyzes the 2 O-methylation steps in the ubiquinone biosynthetic pathway. In Roseobacter denitrificans (strain ATCC 33942 / OCh 114) (Erythrobacter sp. (strain OCh 114)), this protein is Ubiquinone biosynthesis O-methyltransferase.